We begin with the raw amino-acid sequence, 61 residues long: Large ribosomal subunit protein uL30 (61 aa).

The protein belongs to the universal ribosomal protein uL30 family. In terms of assembly, part of the 50S ribosomal subunit.

The protein is Large ribosomal subunit protein uL30 of Francisella philomiragia subsp. philomiragia (strain ATCC 25017 / CCUG 19701 / FSC 153 / O#319-036).